The primary structure comprises 460 residues: Methylenetetrahydrofolate--tRNA-(uracil-5-)-methyltransferase TrmFO (460 aa).

15–20 (GAGLAG) is an FAD binding site.

This sequence belongs to the MnmG family. TrmFO subfamily. It depends on FAD as a cofactor.

It localises to the cytoplasm. The catalysed reaction is uridine(54) in tRNA + (6R)-5,10-methylene-5,6,7,8-tetrahydrofolate + NADH + H(+) = 5-methyluridine(54) in tRNA + (6S)-5,6,7,8-tetrahydrofolate + NAD(+). The enzyme catalyses uridine(54) in tRNA + (6R)-5,10-methylene-5,6,7,8-tetrahydrofolate + NADPH + H(+) = 5-methyluridine(54) in tRNA + (6S)-5,6,7,8-tetrahydrofolate + NADP(+). Its function is as follows. Catalyzes the folate-dependent formation of 5-methyl-uridine at position 54 (M-5-U54) in all tRNAs. This chain is Methylenetetrahydrofolate--tRNA-(uracil-5-)-methyltransferase TrmFO, found in Synechococcus sp. (strain CC9902).